The following is a 394-amino-acid chain: Phosphoglycerate kinase (394 aa).

Substrate is bound by residues 21–23 (DFN), arginine 36, 59–62 (HLGR), arginine 118, and arginine 151. The residue at position 183 (serine 183) is a Phosphoserine. Lysine 201 lines the ATP pocket. Threonine 299 is modified (phosphothreonine). ATP is bound by residues glutamate 323 and 350 to 353 (GGDS).

It belongs to the phosphoglycerate kinase family. In terms of assembly, monomer.

It localises to the cytoplasm. The catalysed reaction is (2R)-3-phosphoglycerate + ATP = (2R)-3-phospho-glyceroyl phosphate + ADP. The protein operates within carbohydrate degradation; glycolysis; pyruvate from D-glyceraldehyde 3-phosphate: step 2/5. This chain is Phosphoglycerate kinase, found in Shouchella clausii (strain KSM-K16) (Alkalihalobacillus clausii).